Consider the following 61-residue polypeptide: EEKSGLYRKPSCGEMSAMHACPMNFAPVCGTDGNTYPNECSLCFQRQNTKTDILITKDDRC.

The 56-residue stretch at 6–61 (LYRKPSCGEMSAMHACPMNFAPVCGTDGNTYPNECSLCFQRQNTKTDILITKDDRC) folds into the Kazal-like domain. Disulfide bonds link Cys-12-Cys-43, Cys-21-Cys-40, and Cys-29-Cys-61.

The protein localises to the secreted. This Anguilla anguilla (European freshwater eel) protein is Probable pancreatic secretory proteinase inhibitor.